The chain runs to 192 residues: Phage-like element PBSX protein XkdU (192 aa).

This sequence to B.subtilis YqcA.

The protein is Phage-like element PBSX protein XkdU (xkdU) of Bacillus subtilis (strain 168).